A 309-amino-acid polypeptide reads, in one-letter code: MKRKIIVGSRRSKLALTQSNWVINKLKENYPAFDFEIKEIVTKGDRILDVTLSKVGGKGLFVSEVEQALSDKTIDFAVHSMKDVPSSLKEGLVIGAIPKRESPLDCFVFNQVNALDELPHGSVIGTSSLRRAAQLLKHRPDFVIKPIRGNIDTRLQKLHAENFDAIILAKAGLARMGWLENTTLKLEDIPPELCLPAVGQGALAIECRESDQQIRDMLTSIHHEETGICVEAERVFLKKLNGGCEIPIAGFATKANEAVHFKGLVGNADGSIILEAEQTGANPSEIGNKVAEDLLSKGADTIIQELRNI.

Cysteine 244 is modified (S-(dipyrrolylmethanemethyl)cysteine).

The protein belongs to the HMBS family. In terms of assembly, monomer. The cofactor is dipyrromethane.

The catalysed reaction is 4 porphobilinogen + H2O = hydroxymethylbilane + 4 NH4(+). It participates in porphyrin-containing compound metabolism; protoporphyrin-IX biosynthesis; coproporphyrinogen-III from 5-aminolevulinate: step 2/4. Tetrapolymerization of the monopyrrole PBG into the hydroxymethylbilane pre-uroporphyrinogen in several discrete steps. This is Porphobilinogen deaminase from Listeria monocytogenes serotype 4a (strain HCC23).